A 216-amino-acid polypeptide reads, in one-letter code: 3-isopropylmalate dehydratase small subunit (216 aa).

The protein belongs to the LeuD family. LeuD type 1 subfamily. As to quaternary structure, heterodimer of LeuC and LeuD.

It catalyses the reaction (2R,3S)-3-isopropylmalate = (2S)-2-isopropylmalate. It functions in the pathway amino-acid biosynthesis; L-leucine biosynthesis; L-leucine from 3-methyl-2-oxobutanoate: step 2/4. Its function is as follows. Catalyzes the isomerization between 2-isopropylmalate and 3-isopropylmalate, via the formation of 2-isopropylmaleate. The protein is 3-isopropylmalate dehydratase small subunit of Burkholderia thailandensis (strain ATCC 700388 / DSM 13276 / CCUG 48851 / CIP 106301 / E264).